Reading from the N-terminus, the 563-residue chain is Phosphomethylpyrimidine synthase (563 aa).

A disordered region spans residues 95-115 (PGKNPSPMNNRTPVRAKQGKS). Substrate is bound by residues N200, M229, Y258, H294, 314–316 (SRG), 355–358 (DALR), and E394. H398 serves as a coordination point for Zn(2+). Y421 is a substrate binding site. A Zn(2+)-binding site is contributed by H462. Positions 544, 547, and 552 each coordinate [4Fe-4S] cluster.

This sequence belongs to the ThiC family. It depends on [4Fe-4S] cluster as a cofactor.

The catalysed reaction is 5-amino-1-(5-phospho-beta-D-ribosyl)imidazole + S-adenosyl-L-methionine = 4-amino-2-methyl-5-(phosphooxymethyl)pyrimidine + CO + 5'-deoxyadenosine + formate + L-methionine + 3 H(+). Its pathway is cofactor biosynthesis; thiamine diphosphate biosynthesis. Catalyzes the synthesis of the hydroxymethylpyrimidine phosphate (HMP-P) moiety of thiamine from aminoimidazole ribotide (AIR) in a radical S-adenosyl-L-methionine (SAM)-dependent reaction. The protein is Phosphomethylpyrimidine synthase of Chlorobium phaeobacteroides (strain BS1).